We begin with the raw amino-acid sequence, 415 residues long: MNEVLAKGKRAKEVARELVLKSTHQKNEALAAVANQLIHETAYILEENKRDIEEGKAKGFSDSLLDRLMLTENRIIDMTEGIKQLIELRDPVGECVREWERPNGLSIQEMRVPLGVVGMIYEARPNVTVDAATICLKTGNTVILRGSSSAIHSNKAIVAVIHRALKQTSLPEESVQLIEDTTRDSAKQLFTMNDYLDVLIPRGGKQLIDTVVREASVPVLETGAGNCHIFIDETADKQMAIDIIINAKTQRPSVCNAIETIVLHEKWAQQHGSELFSSLKERGVELRGDQRALALDSSIVLASEEDWGTEFLSLTLAVKVVSSIEEAIHHINTYGSMHSEAIISENEENVSKFFVSVDAAALYHNASTRFTDGSEFGFGAEIGISTQKLHVRGPMGLPALTSTKYVIRGNGQIRK.

This sequence belongs to the gamma-glutamyl phosphate reductase family.

The protein localises to the cytoplasm. The enzyme catalyses L-glutamate 5-semialdehyde + phosphate + NADP(+) = L-glutamyl 5-phosphate + NADPH + H(+). It participates in amino-acid biosynthesis; L-proline biosynthesis; L-glutamate 5-semialdehyde from L-glutamate: step 2/2. In terms of biological role, catalyzes the NADPH-dependent reduction of L-glutamate 5-phosphate into L-glutamate 5-semialdehyde and phosphate. The product spontaneously undergoes cyclization to form 1-pyrroline-5-carboxylate. This is Gamma-glutamyl phosphate reductase from Bacillus cereus (strain ATCC 10987 / NRS 248).